The following is a 317-amino-acid chain: L-lactate dehydrogenase 2 (317 aa).

NAD(+) is bound by residues Val-16, Asp-37, Lys-42, Tyr-68, and 82-83 (GA). 2 residues coordinate substrate: Gln-85 and Arg-91. NAD(+) contacts are provided by residues Thr-104, 121–123 (ASN), and Thr-146. A substrate-binding site is contributed by 123-126 (NPVD). Position 151–154 (151–154 (DTTR)) interacts with substrate. Residues Arg-156 and His-171 each contribute to the beta-D-fructose 1,6-bisphosphate site. The Proton acceptor role is filled by His-178. Phosphotyrosine is present on Tyr-223. Residue Thr-232 coordinates substrate.

It belongs to the LDH/MDH superfamily. LDH family. Homotetramer.

It localises to the cytoplasm. It catalyses the reaction (S)-lactate + NAD(+) = pyruvate + NADH + H(+). The protein operates within fermentation; pyruvate fermentation to lactate; (S)-lactate from pyruvate: step 1/1. Allosterically activated by fructose 1,6-bisphosphate (FBP). In terms of biological role, catalyzes the conversion of lactate to pyruvate. This is L-lactate dehydrogenase 2 from Enterococcus faecalis (strain ATCC 700802 / V583).